We begin with the raw amino-acid sequence, 79 residues long: Dermaseptin-S8 (79 aa).

An N-terminal signal peptide occupies residues 1–22; sequence MDILKKSLFLVLFLGLVSLSIC. Residues 23–45 constitute a propeptide that is removed on maturation; it reads EEEKRENEDEEKQEDDEQSEMKR. Residue Q76 is modified to Glutamine amide. Positions 78-79 are excised as a propeptide; it reads AQ.

Belongs to the frog skin active peptide (FSAP) family. Dermaseptin subfamily. In terms of tissue distribution, expressed by the skin glands.

The protein resides in the secreted. Potent antimicrobial peptide with activity against bacteria, fungi and protozoa. Probably acts by disturbing membrane functions with its amphipathic structure. This chain is Dermaseptin-S8, found in Phyllomedusa sauvagei (Sauvage's leaf frog).